Consider the following 377-residue polypeptide: 5-hydroxytryptamine receptor 1D (377 aa).

The disordered stretch occupies residues 1-23 (MSPLNQSAEGLPQEASNRSLNAT). Over 1-38 (MSPLNQSAEGLPQEASNRSLNATETSEAWDPRTLQALK) the chain is Extracellular. Residues asparagine 5, asparagine 17, and asparagine 21 are each glycosylated (N-linked (GlcNAc...) asparagine). A helical transmembrane segment spans residues 39-64 (ISLAVVLSVITLATVLSNAFVLTTIL). The Cytoplasmic segment spans residues 65–75 (LTRKLHTPANY). The chain crosses the membrane as a helical span at residues 76–97 (LIGSLATTDLLVSILVMPISIA). The Extracellular segment spans residues 98–109 (YTITHTWNFGQI). Residues 110–134 (LCDIWLSSDITCCTASILHLCVIAL) form a helical membrane-spanning segment. The cysteines at positions 111 and 188 are disulfide-linked. Serotonin-binding residues include aspartate 118 and cysteine 122. Residues 135–137 (DRY) carry the DRY motif; important for ligand-induced conformation changes motif. At 135–154 (DRYWAITDALEYSKRRTAGH) the chain is on the cytoplasmic side. Residues 155–176 (AATMIAIVWAISICISIPPLFW) form a helical membrane-spanning segment. Over 177 to 194 (RQAKAQEEMSDCLVNTSQ) the chain is Extracellular. Residues 195–218 (ISYTIYSTCGAFYIPSVLLIILYG) traverse the membrane as a helical segment. At 219–300 (RIYRAARNRI…ISAARERKAT (82 aa)) the chain is on the cytoplasmic side. Residues 301-326 (KILGIILGAFIICWLPFFVVSLVLPI) form a helical membrane-spanning segment. Position 321 (serine 321) interacts with serotonin. Residues 327 to 335 (CRDSCWIHP) are Extracellular-facing. Residues 336–359 (ALFDFFTWLGYLNSLINPIIYTVF) form a helical membrane-spanning segment. Residues 352–356 (NPIIY) carry the NPxxY motif; important for ligand-induced conformation changes and signaling motif. The Cytoplasmic portion of the chain corresponds to 360 to 377 (NEEFRQAFQKIVPFRKAS).

Belongs to the G-protein coupled receptor 1 family. As to quaternary structure, homodimer. Heterodimer with HTR1B. As to expression, detected in brain neocortex and caudate nucleus (at protein level).

It localises to the cell membrane. In terms of biological role, G-protein coupled receptor for 5-hydroxytryptamine (serotonin). Also functions as a receptor for ergot alkaloid derivatives, various anxiolytic and antidepressant drugs and other psychoactive substances. Ligand binding causes a conformation change that triggers signaling via guanine nucleotide-binding proteins (G proteins) and modulates the activity of downstream effectors, such as adenylate cyclase. HTR1D is coupled to G(i)/G(o) G alpha proteins and mediates inhibitory neurotransmission by inhibiting adenylate cyclase activity. Regulates the release of 5-hydroxytryptamine in the brain, and thereby affects neural activity. May also play a role in regulating the release of other neurotransmitters. May play a role in vasoconstriction. This Homo sapiens (Human) protein is 5-hydroxytryptamine receptor 1D.